Consider the following 238-residue polypeptide: Thrombin-like enzyme gyroxin B2.1 (238 aa).

Positions 1 to 229 (VIGGDECNIN…HLDWIQNIIA (229 aa)) constitute a Peptidase S1 domain. 6 disulfides stabilise this stretch: C7–C141, C28–C44, C78–C236, C120–C190, C152–C169, and C180–C205. H43 functions as the Charge relay system in the catalytic mechanism. The N-linked (GlcNAc...) asparagine glycan is linked to N81. Residue D88 is the Charge relay system of the active site. Catalysis depends on S184, which acts as the Charge relay system.

Belongs to the peptidase S1 family. Snake venom subfamily. In terms of assembly, monomer. In terms of tissue distribution, expressed by the venom gland.

The protein resides in the secreted. Thrombin-like snake venom serine protease. Displays a specificity similar to trypsin. Releases only fibrinopeptide A in the conversion of fibrinogen (FGA) to fibrin. Shows coagulant, esterase and amidase activities. Reversibly increases the permeability of the blood brain barrier (BBB) in mice. Induces the barrel rotation syndrome in mice, which is manifested by gyroxin-like, rapid rolling motions. This syndrome may be due to its effect on BBB permeability, and certainly also to other actions affecting endogenous substrates present in the endothelium, nervous tissues or blood. In Crotalus durissus terrificus (South American rattlesnake), this protein is Thrombin-like enzyme gyroxin B2.1.